A 581-amino-acid chain; its full sequence is Colicin-E2 (581 aa).

5 disordered regions span residues 1–74 (MSGG…SGGG), 242–269 (QTLSPGVTNNTDKDVRPAGFTQGGNTRD), 293–320 (PDQVKQRQDEENRRQQEWDATHPVEAAE), 421–488 (ADAA…IADK), and 513–566 (DLSK…MNNI). Positions 20 to 35 (INGGPTGLGVGGGASD) are enriched in gly residues. Positions 36-45 (GSGWSSENNP) are enriched in low complexity. Over residues 46 to 74 (WGGGSGSGIHWGGGSGHGNGGGNGNSGGG) the composition is skewed to gly residues. A compositionally biased stretch (polar residues) spans 242–251 (QTLSPGVTNN). 3 stretches are compositionally biased toward basic and acidic residues: residues 296 to 320 (VKQRQDEENRRQQEWDATHPVEAAE), 429 to 452 (QERRKQKENKEKDAKDKLDKESKR), and 464 to 475 (PVGDKWLDDAGK). The segment covering 518–527 (FKGSNKTNIQ) has biased composition (polar residues). Residues 535–554 (RKKDQVGGRERFELHHDKPI) are compositionally biased toward basic and acidic residues. Zn(2+) contacts are provided by His549, His574, and His578.

This sequence belongs to the colicin/pyosin nuclease family.

In terms of biological role, this plasmid-coded bactericidal protein is an endonuclease active on both single- and double-stranded DNA but with undefined specificity. Functionally, colicins are polypeptide toxins produced by and active against E.coli and closely related bacteria. This chain is Colicin-E2 (col), found in Escherichia coli.